The primary structure comprises 567 residues: Phosphoglucomutase-like protein 5 (567 aa).

Residues 1–26 form a disordered region; it reads MEGSPIPVLTVPTAPYEDQRPTGGGG. A Phosphothreonine modification is found at Thr-120. Residue Ser-122 is modified to Phosphoserine.

It belongs to the phosphohexose mutase family. Interacts with DMD/dystrophin; the interaction is direct. Interacts with UTRN/utrophin.

It localises to the cell junction. The protein resides in the adherens junction. Its subcellular location is the cytoplasm. It is found in the cytoskeleton. The protein localises to the cell membrane. It localises to the sarcolemma. Functionally, component of adherens-type cell-cell and cell-matrix junctions. Has no phosphoglucomutase activity in vitro. The polypeptide is Phosphoglucomutase-like protein 5 (Rattus norvegicus (Rat)).